A 264-amino-acid polypeptide reads, in one-letter code: MIHSKKLTLGICLVLLIILIVGYVIMTKTNGRNAQIKDTFNQTLKLYPTKNLDDFYDKEGFRDQEFKKGDKGTWIVNSEMVIEPKGKDMETRGMVLYINRNTRTTKGYYFISEMTDDSNGRPKDDEKRYPVKMEHNKIIPTKPLPNDKLRKEIENFKFFVQYGDFKDINDYKDGDISYNPNVPSYSAKYQLKNDDYNVKQLRKRYNIPTNKAPKLLIKGDGDLKGSSVGSKNLEFTFVENKEENIYFTDSVQYTSSEDTSYESN.

The chain crosses the membrane as a helical span at residues 7 to 27 (LTLGICLVLLIILIVGYVIMT).

It belongs to the staphylococcal tandem lipoprotein family.

The protein resides in the cell membrane. This is an uncharacterized protein from Staphylococcus aureus (strain N315).